The chain runs to 779 residues: ATP-dependent RNA helicase SUPV3L1, mitochondrial (779 aa).

The transit peptide at 1 to 40 directs the protein to the mitochondrion; sequence MSLPRCTLLWARLPAGRGAGPRAAPCSALRALVGSFPGAS. Lys-99 bears the N6-acetyllysine mark. Positions 194-334 constitute a Helicase ATP-binding domain; that stretch reads EARARQRKII…AINLVSELLY (141 aa). 207-214 provides a ligand contact to ATP; sequence GPTNSGKT. In terms of domain architecture, Helicase C-terminal spans 353-521; the sequence is VLDHALESLD…PTAEQIEMFA (169 aa). The segment at 650-779 is interaction with LAMTOR5, important for protein stability; that stretch reads PDSSLVRSLQ…RRKKKDPDSD (130 aa). The segment covering 693-703 has biased composition (polar residues); it reads SGDQSRLSGAS. Disordered regions lie at residues 693–732 and 754–779; these read SGDQSRLSGASKSPARRTRGTKSAGNKATEPLSPSDKELP and EWLTQQPEHSREKVGTRRKKKDPDSD. At Ser-725 the chain carries Phosphoserine. The segment covering 761 to 779 has biased composition (basic and acidic residues); it reads EHSREKVGTRRKKKDPDSD.

Belongs to the helicase family. In terms of assembly, homodimer; in free form. Component of the mitochondrial degradosome (mtEXO) complex which is a heteropentamer containing 2 copies of SUPV3L1 and 3 copies of PNPT1. As part of mitochondrial degradosome complex, interacts with GRSF1 in a RNA-dependent manner; the interaction enhances the activity of the complex. Interacts with LAMTOR5/HBXIP, WRN and BLM. Mg(2+) is required as a cofactor. Mn(2+) serves as cofactor.

It is found in the nucleus. It localises to the mitochondrion matrix. The protein resides in the mitochondrion nucleoid. The catalysed reaction is ATP + H2O = ADP + phosphate + H(+). With respect to regulation, helicase activity toward DNA substrate is inhibited by micromolar concentrations of 5,6-dichloro-1-(beta-D-ribofuranosyl)benzotriazole (DRBT) and 4,5,6,7-tetrabromobenzotriazole (TBBT). Helicase activity toward RNA substrate is inhibited by elevated concentrations of TBBT. Inhibited by some ring-expanded nucleoside analogs. Its function is as follows. Major helicase player in mitochondrial RNA metabolism. Component of the mitochondrial degradosome (mtEXO) complex, that degrades 3' overhang double-stranded RNA with a 3'-to-5' directionality in an ATP-dependent manner. Involved in the degradation of non-coding mitochondrial transcripts (MT-ncRNA) and tRNA-like molecules. ATPase and ATP-dependent multisubstrate helicase, able to unwind double-stranded (ds) DNA and RNA, and RNA/DNA heteroduplexes in the 5'-to-3' direction. Plays a role in the RNA surveillance system in mitochondria; regulates the stability of mature mRNAs, the removal of aberrantly formed mRNAs and the rapid degradation of non coding processing intermediates. Also implicated in recombination and chromatin maintenance pathways. May protect cells from apoptosis. Associates with mitochondrial DNA. This is ATP-dependent RNA helicase SUPV3L1, mitochondrial (Supv3l1) from Mus musculus (Mouse).